Here is a 121-residue protein sequence, read N- to C-terminus: Large ribosomal subunit protein uL24 (121 aa).

The tract at residues 1 to 30 (MVRIVSKQPRKQRKARYNAPNHTRGRFLSA) is disordered.

It belongs to the universal ribosomal protein uL24 family. Part of the 50S ribosomal subunit.

In terms of biological role, one of two assembly initiator proteins, it binds directly to the 5'-end of the 23S rRNA, where it nucleates assembly of the 50S subunit. Functionally, located at the polypeptide exit tunnel on the outside of the subunit. The protein is Large ribosomal subunit protein uL24 of Methanoculleus marisnigri (strain ATCC 35101 / DSM 1498 / JR1).